Consider the following 60-residue polypeptide: Large ribosomal subunit protein bL32 (60 aa).

The segment at 1–21 is disordered; sequence MAVPARHTSKAKKNKRRTHYK. Residues 7–20 are compositionally biased toward basic residues; it reads HTSKAKKNKRRTHY.

The protein belongs to the bacterial ribosomal protein bL32 family.

The polypeptide is Large ribosomal subunit protein bL32 (Streptococcus thermophilus (strain ATCC BAA-250 / LMG 18311)).